Reading from the N-terminus, the 271-residue chain is 60 kDa heat shock protein, mitochondrial (271 aa).

2 positions are modified to phosphoserine: Ser30 and Ser33. Residue 50-54 coordinates ATP; that stretch reads DGTTT. Lys83 carries the N6-acetyllysine modification. N6-acetyllysine; alternate is present on residues Lys84, Lys97, and Lys112. 3 positions are modified to N6-succinyllysine; alternate: Lys84, Lys97, and Lys112. An N6-acetyllysine modification is found at Lys125. At Lys126 the chain carries N6-acetyllysine; alternate. An N6-succinyllysine; alternate modification is found at Lys126. Lys145 carries the N6-acetyllysine modification. Residue Lys175 is modified to N6-succinyllysine. Lys188 and Lys237 each carry N6-acetyllysine. Gly257 lines the ATP pocket. An N6-acetyllysine modification is found at Lys270.

The protein belongs to the chaperonin (HSP60) family. In terms of assembly, homoheptamer arranged in a ring structure. The functional units of these chaperonins consist of heptameric rings of the large subunit Hsp60, which function as a back-to-back double ring. Interacts with 2 heptameric Hsp10 rings to form the symmetrical football complex. Interacts with HRAS. Interacts with ATAD3A. Interacts with ETFBKMT and EEF1AKMT3. Interacts with MFHAS1. As to expression, detected at higher levels in caput epididymal spermatazoa than in cauda epididymal spermatazoa (at protein level).

Its subcellular location is the mitochondrion matrix. It carries out the reaction ATP + H2O + a folded polypeptide = ADP + phosphate + an unfolded polypeptide.. Its function is as follows. Chaperonin implicated in mitochondrial protein import and macromolecular assembly. Together with Hsp10, facilitates the correct folding of imported proteins. May also prevent misfolding and promote the refolding and proper assembly of unfolded polypeptides generated under stress conditions in the mitochondrial matrix. The functional units of these chaperonins consist of heptameric rings of the large subunit Hsp60, which function as a back-to-back double ring. In a cyclic reaction, Hsp60 ring complexes bind one unfolded substrate protein per ring, followed by the binding of ATP and association with 2 heptameric rings of the co-chaperonin Hsp10. This leads to sequestration of the substrate protein in the inner cavity of Hsp60 where, for a certain period of time, it can fold undisturbed by other cell components. Synchronous hydrolysis of ATP in all Hsp60 subunits results in the dissociation of the chaperonin rings and the release of ADP and the folded substrate protein. This is 60 kDa heat shock protein, mitochondrial from Mesocricetus auratus (Golden hamster).